Here is a 515-residue protein sequence, read N- to C-terminus: Protein DETOXIFICATION 42 (515 aa).

Over 1 to 35 (MMSEDGYNTDFPRNPLYIFFSDFRSVLKFDELGLE) the chain is Cytoplasmic. The chain crosses the membrane as a helical span at residues 36–56 (IARIALPAALALTADPIASLV). Residues 57 to 58 (DT) lie on the Extracellular side of the membrane. The helical transmembrane segment at 59 to 79 (AFIGQIGPVELAAVGVSIALF) threads the bilayer. Over 80 to 168 (NQVSRIAIFP…AKKRNIPSAS (89 aa)) the chain is Cytoplasmic. The chain crosses the membrane as a helical span at residues 169–189 (SALIIGGVLGLFQAVFLISAA). Topologically, residues 190 to 211 (KPLLSFMGVKHDSPMMRPSQRY) are extracellular. A helical transmembrane segment spans residues 212-232 (LSLRSLGAPAVLLSLAAQGVF). The Cytoplasmic portion of the chain corresponds to 233-242 (RGFKDTTTPL). The helical transmembrane segment at 243–263 (FATVIGDVTNIILDPIFIFVF) threads the bilayer. Over 264 to 266 (RLG) the chain is Extracellular. Residues 267 to 287 (VTGAATAHVISQYLMCGILLW) traverse the membrane as a helical segment. The Cytoplasmic portion of the chain corresponds to 288–312 (KLMGQVDIFNMSTKHLQFCRFMKNG). The chain crosses the membrane as a helical span at residues 313-333 (FLLLMRVIAVTFCVTLSASLA). Topologically, residues 334–349 (AREGSTSMAAFQVCLQ) are extracellular. The chain crosses the membrane as a helical span at residues 350 to 370 (VWLATSLLADGYAVAGQAILA). The Cytoplasmic portion of the chain corresponds to 371–390 (SAFAKKDYKRAAATASRVLQ). A helical membrane pass occupies residues 391–411 (LGLVLGFVLAVILGAGLHFGA). Residues 412 to 423 (RVFTKDDKVLHL) lie on the Extracellular side of the membrane. A helical membrane pass occupies residues 424–444 (ISIGLPFVAGTQPINALAFVF). Residues 445–453 (DGVNFGASD) lie on the Cytoplasmic side of the membrane. Residues 454 to 474 (FGYAAASLVMVAIVSILCLLF) traverse the membrane as a helical segment. Residues 475 to 480 (LSSTHG) are Extracellular-facing. The helical transmembrane segment at 481–501 (FIGLWFGLTIYMSLRAAVGFW) threads the bilayer. Topologically, residues 502–515 (RIGTGTGPWSFLRS) are cytoplasmic.

It belongs to the multi antimicrobial extrusion (MATE) (TC 2.A.66.1) family. Expressed in roots, but not in shoots. Detected in the mature regions of the root, extending from above the root-hair region to the root-shoot junction.

The protein localises to the cell membrane. Citrate transporter critical for aluminum tolerance. Responsible for citrate exudation into the rhizosphere to protect roots from aluminum toxicity. This Arabidopsis thaliana (Mouse-ear cress) protein is Protein DETOXIFICATION 42.